Consider the following 152-residue polypeptide: NADH-quinone oxidoreductase subunit I 1 (152 aa).

2 4Fe-4S ferredoxin-type domains span residues 53 to 83 and 94 to 123; these read MKLGENGETLCIGCNLCALACPENLIAMKSD and VTYVYDVSRCMFCGLCEEACPTQSLKLGTG. Positions 63, 66, 69, 73, 103, 106, 109, and 113 each coordinate [4Fe-4S] cluster.

The protein belongs to the complex I 23 kDa subunit family. NDH-1 is composed of 14 different subunits. Subunits NuoA, H, J, K, L, M, N constitute the membrane sector of the complex. [4Fe-4S] cluster serves as cofactor.

It localises to the cell inner membrane. It carries out the reaction a quinone + NADH + 5 H(+)(in) = a quinol + NAD(+) + 4 H(+)(out). NDH-1 shuttles electrons from NADH, via FMN and iron-sulfur (Fe-S) centers, to quinones in the respiratory chain. The immediate electron acceptor for the enzyme in this species is believed to be ubiquinone. Couples the redox reaction to proton translocation (for every two electrons transferred, four hydrogen ions are translocated across the cytoplasmic membrane), and thus conserves the redox energy in a proton gradient. The protein is NADH-quinone oxidoreductase subunit I 1 of Koribacter versatilis (strain Ellin345).